A 388-amino-acid chain; its full sequence is Succinate--CoA ligase [ADP-forming] subunit beta (388 aa).

The region spanning 9-244 is the ATP-grasp domain; it reads KQLFARYGLP…QSQEDPREAQ (236 aa). Residues Lys46, 53-55, Glu99, Thr102, and Glu107 each bind ATP; that span reads GRG. Residues Asn199 and Asp213 each coordinate Mg(2+). Residues Asn264 and 321–323 contribute to the substrate site; that span reads GIV.

It belongs to the succinate/malate CoA ligase beta subunit family. Heterotetramer of two alpha and two beta subunits. Mg(2+) serves as cofactor.

It carries out the reaction succinate + ATP + CoA = succinyl-CoA + ADP + phosphate. The catalysed reaction is GTP + succinate + CoA = succinyl-CoA + GDP + phosphate. It functions in the pathway carbohydrate metabolism; tricarboxylic acid cycle; succinate from succinyl-CoA (ligase route): step 1/1. Functionally, succinyl-CoA synthetase functions in the citric acid cycle (TCA), coupling the hydrolysis of succinyl-CoA to the synthesis of either ATP or GTP and thus represents the only step of substrate-level phosphorylation in the TCA. The beta subunit provides nucleotide specificity of the enzyme and binds the substrate succinate, while the binding sites for coenzyme A and phosphate are found in the alpha subunit. The sequence is that of Succinate--CoA ligase [ADP-forming] subunit beta from Salmonella choleraesuis (strain SC-B67).